The sequence spans 506 residues: Deoxyribodipyrimidine photo-lyase (506 aa).

Residues Met-1–Ala-21 show a composition bias toward pro residues. The disordered stretch occupies residues Met-1–Gly-33. The Photolyase/cryptochrome alpha/beta domain occupies Gly-38 to Val-171. FAD contacts are provided by residues Tyr-268 and Ser-282–Ser-285. At Ser-312 the chain carries Phosphoserine. Residues Glu-319–Ala-327, Lys-390, Asn-421, Asp-427, and Asp-427–Arg-429 each bind FAD. The tract at residues Lys-487–His-506 is disordered.

Belongs to the DNA photolyase class-2 family. The cofactor is FAD. Expressed in proliferating tissues. Highly expressed in roots and shoot apical meristem (SAM). Expressed in leaves, flag leaves, and panicle.

The protein localises to the nucleus. It carries out the reaction cyclobutadipyrimidine (in DNA) = 2 pyrimidine residues (in DNA).. Involved in repair of UV radiation-induced DNA damage. Catalyzes the light-dependent monomerization (300-600 nm) of cyclobutylpyrimidine dimers (CPDs), which are formed between adjacent bases on the same DNA strand upon exposure to ultraviolet radiation. Required for plant survival in the presence of UV-B light. Not involved in the repair of (6-4) photoproducts. The chain is Deoxyribodipyrimidine photo-lyase (PHR) from Oryza sativa subsp. japonica (Rice).